The chain runs to 503 residues: Cytochrome P450 7A1 (503 aa).

Residues 4-24 traverse the membrane as a helical segment; it reads ISLIWGIAVLVSCCIWFIVGI. Residue cysteine 444 coordinates heme.

The protein belongs to the cytochrome P450 family. Heme is required as a cofactor. As to expression, detected in liver (at protein level). Liver.

The protein resides in the endoplasmic reticulum membrane. The protein localises to the microsome membrane. It carries out the reaction cholesterol + reduced [NADPH--hemoprotein reductase] + O2 = 7alpha-hydroxycholesterol + oxidized [NADPH--hemoprotein reductase] + H2O + H(+). The catalysed reaction is 4beta-hydroxycholesterol + reduced [NADPH--hemoprotein reductase] + O2 = 4beta,7alpha-dihydroxycholesterol + oxidized [NADPH--hemoprotein reductase] + H2O + H(+). It catalyses the reaction lathosterol + reduced [NADPH--hemoprotein reductase] + O2 = 7alpha,8alpha-epoxy-5alpha-cholestan-3beta-ol + oxidized [NADPH--hemoprotein reductase] + H2O + H(+). The enzyme catalyses lathosterol + reduced [NADPH--hemoprotein reductase] + O2 = 5alpha-cholestan-7-oxo-3beta-ol + oxidized [NADPH--hemoprotein reductase] + H2O + H(+). It carries out the reaction 7-dehydrocholesterol + reduced [NADPH--hemoprotein reductase] + O2 = 7-oxocholesterol + oxidized [NADPH--hemoprotein reductase] + H2O + H(+). The catalysed reaction is (24S)-hydroxycholesterol + reduced [NADPH--hemoprotein reductase] + O2 = (24S)-7alpha-dihydroxycholesterol + oxidized [NADPH--hemoprotein reductase] + H2O + H(+). It catalyses the reaction (24R)-hydroxycholesterol + reduced [NADPH--hemoprotein reductase] + O2 = (24R)-7alpha-dihydroxycholesterol + oxidized [NADPH--hemoprotein reductase] + H2O + H(+). The protein operates within lipid metabolism; bile acid biosynthesis. It participates in steroid metabolism; cholesterol degradation. Its function is as follows. A cytochrome P450 monooxygenase involved in the metabolism of endogenous cholesterol and its oxygenated derivatives (oxysterols). Mechanistically, uses molecular oxygen inserting one oxygen atom into a substrate, and reducing the second into a water molecule, with two electrons provided by NADPH via cytochrome P450 reductase (CPR; NADPH-ferrihemoprotein reductase). Functions as a critical regulatory enzyme of bile acid biosynthesis and cholesterol homeostasis. Catalyzes the hydroxylation of carbon hydrogen bond at 7-alpha position of cholesterol, a rate-limiting step in cholesterol catabolism and bile acid biosynthesis. 7-alpha hydroxylates several oxysterols, including 4beta-hydroxycholesterol and 24-hydroxycholesterol. Catalyzes the oxidation of the 7,8 double bond of 7-dehydrocholesterol and lathosterol with direct and predominant formation of the 7-keto derivatives. This chain is Cytochrome P450 7A1 (Cyp7a1), found in Rattus norvegicus (Rat).